We begin with the raw amino-acid sequence, 286 residues long: Probable endonuclease 4 (286 aa).

9 residues coordinate Zn(2+): His-72, His-112, Glu-147, Asp-181, His-184, His-215, Asp-228, His-230, and Glu-260.

Belongs to the AP endonuclease 2 family. Requires Zn(2+) as cofactor.

The catalysed reaction is Endonucleolytic cleavage to 5'-phosphooligonucleotide end-products.. Its function is as follows. Endonuclease IV plays a role in DNA repair. It cleaves phosphodiester bonds at apurinic or apyrimidinic (AP) sites, generating a 3'-hydroxyl group and a 5'-terminal sugar phosphate. This is Probable endonuclease 4 from Mycoplasma pneumoniae (strain ATCC 29342 / M129 / Subtype 1) (Mycoplasmoides pneumoniae).